Here is a 139-residue protein sequence, read N- to C-terminus: Peptide methionine sulfoxide reductase MsrB (139 aa).

Positions 8 to 130 constitute a MsrB domain; sequence EREWQRELSP…NSASLQLKTD (123 aa). Cysteine 47, cysteine 50, cysteine 96, and cysteine 99 together coordinate Zn(2+). Cysteine 119 functions as the Nucleophile in the catalytic mechanism.

The protein belongs to the MsrB Met sulfoxide reductase family. The cofactor is Zn(2+).

The catalysed reaction is L-methionyl-[protein] + [thioredoxin]-disulfide + H2O = L-methionyl-(R)-S-oxide-[protein] + [thioredoxin]-dithiol. The polypeptide is Peptide methionine sulfoxide reductase MsrB (Acinetobacter baylyi (strain ATCC 33305 / BD413 / ADP1)).